Consider the following 249-residue polypeptide: tRNA pseudouridine synthase A (249 aa).

Asp53 serves as the catalytic Nucleophile. Tyr111 contacts substrate.

The protein belongs to the tRNA pseudouridine synthase TruA family. Homodimer.

It carries out the reaction uridine(38/39/40) in tRNA = pseudouridine(38/39/40) in tRNA. Formation of pseudouridine at positions 38, 39 and 40 in the anticodon stem and loop of transfer RNAs. In Streptococcus pneumoniae (strain P1031), this protein is tRNA pseudouridine synthase A.